We begin with the raw amino-acid sequence, 275 residues long: Small ribosomal subunit protein uS3 (275 aa).

A KH type-2 domain is found at isoleucine 38–lysine 106. A disordered region spans residues alanine 215–serine 275. Over residues serine 237–serine 275 the composition is skewed to low complexity.

Belongs to the universal ribosomal protein uS3 family. In terms of assembly, part of the 30S ribosomal subunit. Forms a tight complex with proteins S10 and S14.

Functionally, binds the lower part of the 30S subunit head. Binds mRNA in the 70S ribosome, positioning it for translation. The sequence is that of Small ribosomal subunit protein uS3 from Mycolicibacterium smegmatis (strain ATCC 700084 / mc(2)155) (Mycobacterium smegmatis).